Reading from the N-terminus, the 367-residue chain is Alanine racemase (367 aa).

Residue lysine 40 is the Proton acceptor; specific for D-alanine of the active site. The residue at position 40 (lysine 40) is an N6-(pyridoxal phosphate)lysine. Arginine 136 serves as a coordination point for substrate. Tyrosine 263 (proton acceptor; specific for L-alanine) is an active-site residue. A substrate-binding site is contributed by methionine 310.

It belongs to the alanine racemase family. Requires pyridoxal 5'-phosphate as cofactor.

It catalyses the reaction L-alanine = D-alanine. Its pathway is amino-acid biosynthesis; D-alanine biosynthesis; D-alanine from L-alanine: step 1/1. Functionally, catalyzes the interconversion of L-alanine and D-alanine. May also act on other amino acids. This chain is Alanine racemase (alr), found in Streptococcus pneumoniae (strain Taiwan19F-14).